The primary structure comprises 295 residues: Protease Rv3090 (295 aa).

2 consecutive transmembrane segments (helical) span residues 2 to 22 and 37 to 57; these read TWQIVFVVICVIVAGVAALFW and VTIAAVAAAAVFFFLGCFTIV.

It localises to the cell membrane. Its subcellular location is the secreted. It is found in the cell wall. In terms of biological role, protease that triggers late cell apoptosis and contributes to the pathogenicity and dissemination of M.tuberculosis. In a mouse model of infection, can induce hepatocyte and lung cell apoptosis and cause pathological damage to the spleen, liver and lungs. Specifically stimulates the secretion of inflammatory cytokines including TNF-alpha, IL-6 and IL-1 beta. Can degrade casein in vitro. The sequence is that of Protease Rv3090 from Mycobacterium tuberculosis (strain ATCC 25618 / H37Rv).